We begin with the raw amino-acid sequence, 572 residues long: Proline--tRNA ligase (572 aa).

Belongs to the class-II aminoacyl-tRNA synthetase family. ProS type 1 subfamily. As to quaternary structure, homodimer.

Its subcellular location is the cytoplasm. The catalysed reaction is tRNA(Pro) + L-proline + ATP = L-prolyl-tRNA(Pro) + AMP + diphosphate. Its function is as follows. Catalyzes the attachment of proline to tRNA(Pro) in a two-step reaction: proline is first activated by ATP to form Pro-AMP and then transferred to the acceptor end of tRNA(Pro). As ProRS can inadvertently accommodate and process non-cognate amino acids such as alanine and cysteine, to avoid such errors it has two additional distinct editing activities against alanine. One activity is designated as 'pretransfer' editing and involves the tRNA(Pro)-independent hydrolysis of activated Ala-AMP. The other activity is designated 'posttransfer' editing and involves deacylation of mischarged Ala-tRNA(Pro). The misacylated Cys-tRNA(Pro) is not edited by ProRS. In Haemophilus influenzae (strain PittEE), this protein is Proline--tRNA ligase.